The sequence spans 321 residues: Hex-5-enoyl-[acyl-carrier protein] acetylenase (321 aa).

2 helical membrane passes run 36-56 and 62-82; these read FLLYNVIPTIGTITAIALLWW and VEIGLLIGMWALSMIGMSVGL. The short motif at 83 to 88 is the Histidine box-1 element; the sequence is HRYFAH. The helical transmembrane segment at 99–119 threads the bilayer; that stretch reads VILAILGCMGAQGPVVSWVAV. A Histidine box-2 motif is present at residues 120-124; that stretch reads HRRHH. A helical transmembrane segment spans residues 188-208; sequence YVVWIVLGLLIPTILGGIIHG. The Histidine box-3 signature appears at 269 to 273; that stretch reads QNNHH.

This sequence belongs to the fatty acid desaturase type 2 family. Fe(2+) serves as cofactor.

It is found in the membrane. It catalyses the reaction 5-hexenoyl-[ACP] + 2 reduced [2Fe-2S]-[ferredoxin] + O2 + 2 H(+) = 5-hexynoyl-[ACP] + 2 oxidized [2Fe-2S]-[ferredoxin] + 2 H2O. The catalysed reaction is hexanoyl-[ACP] + 2 reduced [2Fe-2S]-[ferredoxin] + O2 + 2 H(+) = 5-hexenoyl-[ACP] + 2 oxidized [2Fe-2S]-[ferredoxin] + 2 H2O. Functionally, desaturase involved in the biosynthesis of jamaicamides, which show sodium channel blocking activity and fish toxicity. Catalyzes the conversion of 5-hexenoyl loaded onto the acyl carrier protein JamC (5-hexenoyl-JamC) to 5-hexynoyl-JamC. Can also catalyze the conversion of hexanoyl-JamC to 5-hexenoyl-JamC, but it cannot use free 5-hexenoic acid, 5-hexenoyl-CoA, 2-hexenoyl-JamC, 3-hexenoyl-JamC or 4-hexenoyl-JamC. Is specific for C(6) chains, and cannot use 4-pentenoyl-JamC, 6-heptenoyl-JamC or 7-octenoyl-JamC as substrate. This is Hex-5-enoyl-[acyl-carrier protein] acetylenase from Moorena producens (strain JHB).